A 187-amino-acid chain; its full sequence is Acireductone dioxygenase (187 aa).

Residues His-90, His-92, Glu-96, and His-135 each coordinate Fe(2+). Ni(2+) is bound by residues His-90, His-92, Glu-96, and His-135.

The protein belongs to the acireductone dioxygenase (ARD) family. The cofactor is Fe(2+). It depends on Ni(2+) as a cofactor.

The protein resides in the cytoplasm. The protein localises to the nucleus. It carries out the reaction 1,2-dihydroxy-5-(methylsulfanyl)pent-1-en-3-one + O2 = 4-methylsulfanyl-2-oxobutanoate + formate + 2 H(+). It catalyses the reaction 1,2-dihydroxy-5-(methylsulfanyl)pent-1-en-3-one + O2 = 3-(methylsulfanyl)propanoate + CO + formate + 2 H(+). The protein operates within amino-acid biosynthesis; L-methionine biosynthesis via salvage pathway; L-methionine from S-methyl-5-thio-alpha-D-ribose 1-phosphate: step 5/6. Its function is as follows. Catalyzes 2 different reactions between oxygen and the acireductone 1,2-dihydroxy-3-keto-5-methylthiopentene (DHK-MTPene) depending upon the metal bound in the active site. Fe-containing acireductone dioxygenase (Fe-ARD) produces formate and 2-keto-4-methylthiobutyrate (KMTB), the alpha-ketoacid precursor of methionine in the methionine recycle pathway. Ni-containing acireductone dioxygenase (Ni-ARD) produces methylthiopropionate, carbon monoxide and formate, and does not lie on the methionine recycle pathway. This is Acireductone dioxygenase from Drosophila pseudoobscura pseudoobscura (Fruit fly).